A 229-amino-acid polypeptide reads, in one-letter code: Uracil-DNA glycosylase (229 aa).

The Proton acceptor role is filled by D71.

Belongs to the uracil-DNA glycosylase (UDG) superfamily. UNG family.

It localises to the cytoplasm. The enzyme catalyses Hydrolyzes single-stranded DNA or mismatched double-stranded DNA and polynucleotides, releasing free uracil.. Functionally, excises uracil residues from the DNA which can arise as a result of misincorporation of dUMP residues by DNA polymerase or due to deamination of cytosine. In Campylobacter lari (strain RM2100 / D67 / ATCC BAA-1060), this protein is Uracil-DNA glycosylase.